The following is a 382-amino-acid chain: Mannitol-1-phosphate 5-dehydrogenase (382 aa).

3 to 14 (ALHFGAGNIGRG) contributes to the NAD(+) binding site.

This sequence belongs to the mannitol dehydrogenase family.

It carries out the reaction D-mannitol 1-phosphate + NAD(+) = beta-D-fructose 6-phosphate + NADH + H(+). The polypeptide is Mannitol-1-phosphate 5-dehydrogenase (Salmonella agona (strain SL483)).